Reading from the N-terminus, the 84-residue chain is Small ribosomal subunit protein bS20 (84 aa).

Belongs to the bacterial ribosomal protein bS20 family.

Its function is as follows. Binds directly to 16S ribosomal RNA. This chain is Small ribosomal subunit protein bS20, found in Limosilactobacillus reuteri (strain DSM 20016) (Lactobacillus reuteri).